A 236-amino-acid polypeptide reads, in one-letter code: 1-(5-phosphoribosyl)-5-[(5-phosphoribosylamino)methylideneamino] imidazole-4-carboxamide isomerase (236 aa).

Catalysis depends on aspartate 8, which acts as the Proton acceptor. Catalysis depends on aspartate 127, which acts as the Proton donor.

Belongs to the HisA/HisF family.

It is found in the cytoplasm. The catalysed reaction is 1-(5-phospho-beta-D-ribosyl)-5-[(5-phospho-beta-D-ribosylamino)methylideneamino]imidazole-4-carboxamide = 5-[(5-phospho-1-deoxy-D-ribulos-1-ylimino)methylamino]-1-(5-phospho-beta-D-ribosyl)imidazole-4-carboxamide. The protein operates within amino-acid biosynthesis; L-histidine biosynthesis; L-histidine from 5-phospho-alpha-D-ribose 1-diphosphate: step 4/9. The protein is 1-(5-phosphoribosyl)-5-[(5-phosphoribosylamino)methylideneamino] imidazole-4-carboxamide isomerase of Campylobacter hominis (strain ATCC BAA-381 / DSM 21671 / CCUG 45161 / LMG 19568 / NCTC 13146 / CH001A).